The primary structure comprises 203 residues: Ribonuclease HII (203 aa).

The region spanning 15 to 201 (LLVAGLDEAG…VAQAPLRFPE (187 aa)) is the RNase H type-2 domain. Positions 21, 22, and 111 each coordinate a divalent metal cation.

The protein belongs to the RNase HII family. Requires Mn(2+) as cofactor. It depends on Mg(2+) as a cofactor.

It localises to the cytoplasm. It carries out the reaction Endonucleolytic cleavage to 5'-phosphomonoester.. Its function is as follows. Endonuclease that specifically degrades the RNA of RNA-DNA hybrids. This chain is Ribonuclease HII, found in Thermus thermophilus (strain ATCC BAA-163 / DSM 7039 / HB27).